Consider the following 455-residue polypeptide: Chromosomal replication initiator protein DnaA (455 aa).

The domain I, interacts with DnaA modulators stretch occupies residues 1-77 (MASLNENQKF…GFEVFGRMID (77 aa)). Residues 77–116 (DYELYANDELTELELHRLNNQSSIEEQPRSTAKPASPLVS) form a domain II region. The segment at 117 to 333 (GLNEKYNFEN…GALNRVEFVA (217 aa)) is domain III, AAA+ region. ATP is bound by residues Gly-161, Gly-163, Lys-164, and Thr-165. The tract at residues 334-455 (RANGIAVVDI…KDIDSIKRKF (122 aa)) is domain IV, binds dsDNA.

The protein belongs to the DnaA family. Oligomerizes as a right-handed, spiral filament on DNA at oriC.

It localises to the cytoplasm. In terms of biological role, plays an essential role in the initiation and regulation of chromosomal replication. ATP-DnaA binds to the origin of replication (oriC) to initiate formation of the DNA replication initiation complex once per cell cycle. Binds the DnaA box (a 9 base pair repeat at the origin) and separates the double-stranded (ds)DNA. Forms a right-handed helical filament on oriC DNA; dsDNA binds to the exterior of the filament while single-stranded (ss)DNA is stabiized in the filament's interior. The ATP-DnaA-oriC complex binds and stabilizes one strand of the AT-rich DNA unwinding element (DUE), permitting loading of DNA polymerase. After initiation quickly degrades to an ADP-DnaA complex that is not apt for DNA replication. Binds acidic phospholipids. This chain is Chromosomal replication initiator protein DnaA, found in Lactococcus lactis subsp. lactis (strain IL1403) (Streptococcus lactis).